Consider the following 278-residue polypeptide: Transmembrane protein 41B (278 aa).

Positions 1–31 are disordered; it reads MQVHERSHTGGHTCQCNHGSEKKAPATGKVH. 6 helical membrane-spanning segments follow: residues 39–59, 96–116, 132–154, 184–204, 212–232, and 249–269; these read MSLLILVSIFLCAASIMFLVY, FYVEVLVAYFTTYIFLQTFAI, FPLALFLVCLCSGLGASFSYLLS, LINYIIFLRITPFLPNWFINI, PLKVFFLGTFIGVAPPSFVAI, and SWNSVIILMVLAVLSILPAIF. The VTT domain; required for its function in autophagy stretch occupies residues 127 to 238; sequence GFLYPFPLAL…FVAIKAGTTL (112 aa).

The protein belongs to the TMEM41 family.

Its subcellular location is the endoplasmic reticulum membrane. The protein resides in the endomembrane system. It carries out the reaction a 1,2-diacyl-sn-glycero-3-phospho-L-serine(in) = a 1,2-diacyl-sn-glycero-3-phospho-L-serine(out). It catalyses the reaction cholesterol(in) = cholesterol(out). The catalysed reaction is a 1,2-diacyl-sn-glycero-3-phosphocholine(in) = a 1,2-diacyl-sn-glycero-3-phosphocholine(out). The enzyme catalyses a 1,2-diacyl-sn-glycero-3-phosphoethanolamine(in) = a 1,2-diacyl-sn-glycero-3-phosphoethanolamine(out). Its function is as follows. Phospholipid scramblase involved in lipid homeostasis and membrane dynamics processes. Has phospholipid scramblase activity toward cholesterol and phosphatidylserine, as well as phosphatidylethanolamine and phosphatidylcholine. Required for autophagosome formation: participates in early stages of autophagosome biogenesis at the endoplasmic reticulum (ER) membrane by reequilibrating the leaflets of the ER as lipids are extracted by atg2 (atg2a or atg2b) to mediate autophagosome assembly. In addition to autophagy, involved in other processes in which phospholipid scramblase activity is required. Required for normal motor neuron development. The protein is Transmembrane protein 41B of Xenopus tropicalis (Western clawed frog).